Here is a 199-residue protein sequence, read N- to C-terminus: ATP-dependent Clp protease proteolytic subunit 2 (199 aa).

Ser98 functions as the Nucleophile in the catalytic mechanism. His123 is an active-site residue.

Belongs to the peptidase S14 family. Fourteen ClpP subunits assemble into 2 heptameric rings which stack back to back to give a disk-like structure with a central cavity, resembling the structure of eukaryotic proteasomes.

Its subcellular location is the cytoplasm. It catalyses the reaction Hydrolysis of proteins to small peptides in the presence of ATP and magnesium. alpha-casein is the usual test substrate. In the absence of ATP, only oligopeptides shorter than five residues are hydrolyzed (such as succinyl-Leu-Tyr-|-NHMec, and Leu-Tyr-Leu-|-Tyr-Trp, in which cleavage of the -Tyr-|-Leu- and -Tyr-|-Trp bonds also occurs).. Functionally, cleaves peptides in various proteins in a process that requires ATP hydrolysis. Has a chymotrypsin-like activity. Plays a major role in the degradation of misfolded proteins. The protein is ATP-dependent Clp protease proteolytic subunit 2 of Corynebacterium efficiens (strain DSM 44549 / YS-314 / AJ 12310 / JCM 11189 / NBRC 100395).